The chain runs to 591 residues: Probable lysosomal cobalamin transporter (591 aa).

5 consecutive transmembrane segments (helical) span residues 8 to 28, 39 to 59, 95 to 115, 144 to 164, and 198 to 218; these read LIWV…STFV, AAVT…VLLI, IVYY…IPFT, WTLG…FVPF, and FLIT…MALL. Positions 238–266 are disordered; it reads TASQLETNRERQRQLEGRNEGREGGLDSR. Residues 244–266 show a composition bias toward basic and acidic residues; the sequence is TNRERQRQLEGRNEGREGGLDSR. 4 helical membrane-spanning segments follow: residues 315-335, 378-398, 422-442, and 509-529; these read LIGG…MLIT, VLFL…IATA, MATV…AMVV, and FFGI…LIVF.

Belongs to the LIMR family. LMBRD1 subfamily.

The protein resides in the lysosome membrane. Probable lysosomal cobalamin transporter. Required to export cobalamin from lysosomes allowing its conversion to cofactors. This is Probable lysosomal cobalamin transporter from Pyrenophora tritici-repentis (strain Pt-1C-BFP) (Wheat tan spot fungus).